Consider the following 541-residue polypeptide: Glucose-6-phosphate isomerase (541 aa).

The active-site Proton donor is glutamate 346. Residues histidine 377 and lysine 506 contribute to the active site.

The protein belongs to the GPI family.

The protein resides in the cytoplasm. The catalysed reaction is alpha-D-glucose 6-phosphate = beta-D-fructose 6-phosphate. Its pathway is carbohydrate biosynthesis; gluconeogenesis. It functions in the pathway carbohydrate degradation; glycolysis; D-glyceraldehyde 3-phosphate and glycerone phosphate from D-glucose: step 2/4. Functionally, catalyzes the reversible isomerization of glucose-6-phosphate to fructose-6-phosphate. The protein is Glucose-6-phosphate isomerase of Agrobacterium fabrum (strain C58 / ATCC 33970) (Agrobacterium tumefaciens (strain C58)).